Reading from the N-terminus, the 249-residue chain is (2S)-[(R)-hydroxy(phenyl)methyl]succinyl-CoA dehydrogenase subunit BbsC (249 aa).

The protein belongs to the short-chain dehydrogenases/reductases (SDR) family. In terms of assembly, heterotetramer composed of 2 inactive BbsC subunits and 2 active BbsD subunits.

It functions in the pathway xenobiotic degradation; toluene degradation. Involved in an anaerobic toluene degradation pathway. Catalytically inactive subunit, which is probably required for the structural and/or regulatory integrity of the catalytic subunit BbsD. This subunit cannot bind NAD(+) or substrate. The protein is (2S)-[(R)-hydroxy(phenyl)methyl]succinyl-CoA dehydrogenase subunit BbsC of Thauera aromatica.